The sequence spans 450 residues: Enolase (450 aa).

Residue Gln-167 participates in (2R)-2-phosphoglycerate binding. The active-site Proton donor is the Glu-209. Residues Asp-250, Glu-307, and Asp-334 each contribute to the Mg(2+) site. The (2R)-2-phosphoglycerate site is built by Lys-359, Arg-388, Ser-389, and Lys-410. Residue Lys-359 is the Proton acceptor of the active site.

This sequence belongs to the enolase family. Mg(2+) serves as cofactor.

The protein localises to the cytoplasm. It is found in the secreted. The protein resides in the cell surface. The enzyme catalyses (2R)-2-phosphoglycerate = phosphoenolpyruvate + H2O. Its pathway is carbohydrate degradation; glycolysis; pyruvate from D-glyceraldehyde 3-phosphate: step 4/5. In terms of biological role, catalyzes the reversible conversion of 2-phosphoglycerate (2-PG) into phosphoenolpyruvate (PEP). It is essential for the degradation of carbohydrates via glycolysis. Functionally, 'Moonlights' as a plasminogen receptor and plasmin activator. Contributes to host (pig) cell adhesion; anti-enolase antibodies decrease binding to porcine kidney cells about 60%. Binds host plasminogen and fibronectin in vitro; enhances the activity of host tissue-specific plasminogen activator (tPA), and helps plasminogen and tPA degrade articifial host extracellular matrices. The chain is Enolase from Mesomycoplasma hyorhinis (strain HUB-1) (Mycoplasma hyorhinis).